A 193-amino-acid polypeptide reads, in one-letter code: ATP-dependent Clp protease proteolytic subunit (193 aa).

The active-site Nucleophile is the serine 98. The active site involves histidine 123.

The protein belongs to the peptidase S14 family. As to quaternary structure, fourteen ClpP subunits assemble into 2 heptameric rings which stack back to back to give a disk-like structure with a central cavity, resembling the structure of eukaryotic proteasomes.

It is found in the cytoplasm. It carries out the reaction Hydrolysis of proteins to small peptides in the presence of ATP and magnesium. alpha-casein is the usual test substrate. In the absence of ATP, only oligopeptides shorter than five residues are hydrolyzed (such as succinyl-Leu-Tyr-|-NHMec, and Leu-Tyr-Leu-|-Tyr-Trp, in which cleavage of the -Tyr-|-Leu- and -Tyr-|-Trp bonds also occurs).. Functionally, cleaves peptides in various proteins in a process that requires ATP hydrolysis. Has a chymotrypsin-like activity. Plays a major role in the degradation of misfolded proteins. The polypeptide is ATP-dependent Clp protease proteolytic subunit (Haemophilus influenzae (strain PittEE)).